An 875-amino-acid polypeptide reads, in one-letter code: Alanine--tRNA ligase (875 aa).

Zn(2+) is bound by residues His565, His569, Cys666, and His670.

It belongs to the class-II aminoacyl-tRNA synthetase family. Requires Zn(2+) as cofactor.

The protein localises to the cytoplasm. It carries out the reaction tRNA(Ala) + L-alanine + ATP = L-alanyl-tRNA(Ala) + AMP + diphosphate. Functionally, catalyzes the attachment of alanine to tRNA(Ala) in a two-step reaction: alanine is first activated by ATP to form Ala-AMP and then transferred to the acceptor end of tRNA(Ala). Also edits incorrectly charged Ser-tRNA(Ala) and Gly-tRNA(Ala) via its editing domain. This chain is Alanine--tRNA ligase, found in Methylibium petroleiphilum (strain ATCC BAA-1232 / LMG 22953 / PM1).